A 351-amino-acid polypeptide reads, in one-letter code: UDP-N-acetylglucosamine--N-acetylmuramyl-(pentapeptide) pyrophosphoryl-undecaprenol N-acetylglucosamine transferase (351 aa).

Residues Thr13–Gly15, Asn125, Arg161, Ser189, Ile241, Ala260–Glu265, and Gln285 contribute to the UDP-N-acetyl-alpha-D-glucosamine site.

Belongs to the glycosyltransferase 28 family. MurG subfamily.

The protein localises to the cell inner membrane. The catalysed reaction is di-trans,octa-cis-undecaprenyl diphospho-N-acetyl-alpha-D-muramoyl-L-alanyl-D-glutamyl-meso-2,6-diaminopimeloyl-D-alanyl-D-alanine + UDP-N-acetyl-alpha-D-glucosamine = di-trans,octa-cis-undecaprenyl diphospho-[N-acetyl-alpha-D-glucosaminyl-(1-&gt;4)]-N-acetyl-alpha-D-muramoyl-L-alanyl-D-glutamyl-meso-2,6-diaminopimeloyl-D-alanyl-D-alanine + UDP + H(+). It functions in the pathway cell wall biogenesis; peptidoglycan biosynthesis. In terms of biological role, cell wall formation. Catalyzes the transfer of a GlcNAc subunit on undecaprenyl-pyrophosphoryl-MurNAc-pentapeptide (lipid intermediate I) to form undecaprenyl-pyrophosphoryl-MurNAc-(pentapeptide)GlcNAc (lipid intermediate II). The protein is UDP-N-acetylglucosamine--N-acetylmuramyl-(pentapeptide) pyrophosphoryl-undecaprenol N-acetylglucosamine transferase of Haemophilus influenzae (strain 86-028NP).